The sequence spans 311 residues: Lipoyl synthase (311 aa).

Positions 36, 41, 47, 66, 70, 73, and 280 each coordinate [4Fe-4S] cluster. Residues 51-269 (RDGPGTATFM…RVAESEFGFL (219 aa)) form the Radical SAM core domain.

The protein belongs to the radical SAM superfamily. Lipoyl synthase family. The cofactor is [4Fe-4S] cluster.

The protein localises to the cytoplasm. It catalyses the reaction [[Fe-S] cluster scaffold protein carrying a second [4Fe-4S](2+) cluster] + N(6)-octanoyl-L-lysyl-[protein] + 2 oxidized [2Fe-2S]-[ferredoxin] + 2 S-adenosyl-L-methionine + 4 H(+) = [[Fe-S] cluster scaffold protein] + N(6)-[(R)-dihydrolipoyl]-L-lysyl-[protein] + 4 Fe(3+) + 2 hydrogen sulfide + 2 5'-deoxyadenosine + 2 L-methionine + 2 reduced [2Fe-2S]-[ferredoxin]. It functions in the pathway protein modification; protein lipoylation via endogenous pathway; protein N(6)-(lipoyl)lysine from octanoyl-[acyl-carrier-protein]: step 2/2. Catalyzes the radical-mediated insertion of two sulfur atoms into the C-6 and C-8 positions of the octanoyl moiety bound to the lipoyl domains of lipoate-dependent enzymes, thereby converting the octanoylated domains into lipoylated derivatives. The chain is Lipoyl synthase from Halobacterium salinarum (strain ATCC 29341 / DSM 671 / R1).